The primary structure comprises 902 residues: 4-hydroxyphenylacetate decarboxylase glycyl radical subunit (902 aa).

The 737-residue stretch at 38 to 774 (KRAEDLLDVY…ATLATPDGRL (737 aa)) folds into the PFL domain. Residues Ser-348 and Cys-507 each coordinate 4-hydroxyphenylacetate. Cys-507 acts as the Cysteine radical intermediate in catalysis. Catalysis depends on Glu-509, which acts as the Proton donor. 4-hydroxyphenylacetate is bound by residues His-540 and Glu-641. Residues 782 to 902 (GSVSAYAGTD…VIARTEYEGV (121 aa)) form the Glycine radical domain. A Glycine radical modification is found at Gly-877.

The protein belongs to the glycyl radical enzyme (GRE) family. HPAD subfamily. As to quaternary structure, heterooctamer consisting of 4 large (HpdB) subunits and 4 small (HpdC) subunits. Also forms a catalytically inactive homodimer. Phosphorylated on serine. Phosphorylation may trigger the formation of the active heterooctamers and thereby regulates enzyme activity. Post-translationally, requires the activating protein HpdA to generate the key active site glycyl radical that is involved in catalysis.

It catalyses the reaction 4-hydroxyphenylacetate + H(+) = 4-methylphenol + CO2. The catalysed reaction is 3,4-dihydroxyphenylacetate + H(+) = 4-methylcatechol + CO2. The enzyme catalyses 2-hydroxy-2-(4-hydroxyphenyl)acetate + H(+) = 4-hydroxybenzyl alcohol + CO2. With respect to regulation, enzyme activity catalyzed by the HPA decarboxylase complex is rapidly and irreversibly inactivated by oxygen. Competitively inhibited by p-hydroxyphenylacetamide. Not inhibited by m- or o-hydroxyphenyl-acetate, p-hydroxybenzoate or p-hydroxyphenylpropionate. In terms of biological role, glycyl radical subunit of the HPA decarboxylase that decarboxylates phenylacetates with a hydroxyl group in the p-position. Active toward 4-hydroxyphenylacetate, 3,4-dihydroxyphenylacetate and to a lesser extent p-hydroxymandelate (2-hydroxy-2-(4-hydroxyphenyl)acetate), forming 4-methylphenol, 4-methylcatechol and 4-hydroxybenzylalcohol, respectively. Is likely involved in the catabolism of aromatic amino acids such as tyrosine fermentation. 4-methylphenol (p-cresol) formation provides metabolic toxicity, which may benefit the pathogen C.difficile by suppression of the endogenous gastrointestinal microflora, allowing the development of gastrointestinal infections. The large subunit is the catalytic subunit that binds the substrate. The sequence is that of 4-hydroxyphenylacetate decarboxylase glycyl radical subunit from Clostridioides difficile (Peptoclostridium difficile).